A 143-amino-acid polypeptide reads, in one-letter code: Actin-depolymerizing factor 5 (143 aa).

The ADF-H domain maps to 11-143 (GMNVKEECQR…GYDVIRGRAQ (133 aa)).

This sequence belongs to the actin-binding proteins ADF family.

Its function is as follows. Actin-depolymerizing protein. Severs actin filaments (F-actin) and binds to actin monomers. In Oryza sativa subsp. japonica (Rice), this protein is Actin-depolymerizing factor 5 (ADF5).